The sequence spans 857 residues: Bifunctional levopimaradiene synthase, chloroplastic (857 aa).

A chloroplast-targeting transit peptide spans 1 to 33 (MALPSSSLSSQIHTGATTQCIPHFHGSLNAGTS). Lys257 contacts substrate. Mg(2+) is bound by residues Asp390 and Asp392. The DXDD motif signature appears at 390–393 (DIDD). Position 477 (Lys477) interacts with substrate. The Mg(2+) site is built by Asp609, Asp613, Asn753, Thr757, and Glu761. Positions 609-613 (DDLYD) match the DDXXD motif motif.

This sequence belongs to the terpene synthase family. Tpsd subfamily. Mg(2+) is required as a cofactor.

It localises to the plastid. Its subcellular location is the chloroplast. The catalysed reaction is (2E,6E,10E)-geranylgeranyl diphosphate = (+)-copalyl diphosphate. It carries out the reaction (+)-copalyl diphosphate = abieta-7,13-diene + diphosphate. It catalyses the reaction (+)-copalyl diphosphate = abieta-8(14),12-diene + diphosphate. The enzyme catalyses (+)-copalyl diphosphate = neoabietadiene + diphosphate. It participates in terpene metabolism; oleoresin biosynthesis. Involved in defensive oleoresin formation in conifers in response to insect attack or other injury. Involved in diterpene (C20) olefins biosynthesis. Bifunctional enzyme that catalyzes two sequential cyclizations of geranylgeranyl diphosphate (GGPP) to levopimaradiene. Levopimaradiene is the major products of the enzyme with abietadiene and neoabietadiene. No activity with farnesyl diphosphate (FPP) as substrate. This Pinus contorta (Shore pine) protein is Bifunctional levopimaradiene synthase, chloroplastic.